A 43-amino-acid polypeptide reads, in one-letter code: Metallothionein A (43 aa).

The beta stretch occupies residues 1 to 16 (SCAGSCKCKNCRCRSC). Residues C2, C6, C8, C11, C13, C16, C20, C21, C23, C24, C28, C31, C35, and C37 each contribute to the a divalent metal cation site. The segment at 17–43 (RKSCCSCCPAGCNNCAKGCVCKEPASS) is alpha.

The protein belongs to the metallothionein superfamily. Type 1 family.

Functionally, metallothioneins have a high content of cysteine residues that bind various heavy metals. The polypeptide is Metallothionein A (Colinus virginianus (Northern bobwhite)).